A 426-amino-acid chain; its full sequence is Tol-Pal system protein TolB (426 aa).

The N-terminal stretch at 1-24 (MKLKSRFTSIIGVITLFFSQTVTA) is a signal peptide.

This sequence belongs to the TolB family. In terms of assembly, the Tol-Pal system is composed of five core proteins: the inner membrane proteins TolA, TolQ and TolR, the periplasmic protein TolB and the outer membrane protein Pal. They form a network linking the inner and outer membranes and the peptidoglycan layer.

It localises to the periplasm. Part of the Tol-Pal system, which plays a role in outer membrane invagination during cell division and is important for maintaining outer membrane integrity. This is Tol-Pal system protein TolB from Actinobacillus pleuropneumoniae serotype 3 (strain JL03).